The sequence spans 360 residues: Phospho-N-acetylmuramoyl-pentapeptide-transferase (360 aa).

10 helical membrane-spanning segments follow: residues 26–46 (AILGLLTALMFSLWWGPKLIE), 74–94 (MGGLLILGAIFLSVLLWGDLG), 97–117 (YVWVMLFVLGSFGMIGFIDDY), 134–154 (YILQSLAALIIAFFLYTTAAN), 168–188 (VMPQLGAVFIVLAYFTIVGSS), 199–219 (GLAIMPTVMVAAAFALIAYLS), 236–256 (SGELVIVCTAIVGAGLGFLWF), 263–283 (VFMGDVGSLSLGAALGAIAVL), 288–308 (ILLVIMGGVFVMETVSVILQV), and 338–358 (VIVRFWIISIFLVLLGLATLK).

Belongs to the glycosyltransferase 4 family. MraY subfamily. Requires Mg(2+) as cofactor.

It localises to the cell inner membrane. It carries out the reaction UDP-N-acetyl-alpha-D-muramoyl-L-alanyl-gamma-D-glutamyl-meso-2,6-diaminopimeloyl-D-alanyl-D-alanine + di-trans,octa-cis-undecaprenyl phosphate = di-trans,octa-cis-undecaprenyl diphospho-N-acetyl-alpha-D-muramoyl-L-alanyl-D-glutamyl-meso-2,6-diaminopimeloyl-D-alanyl-D-alanine + UMP. It participates in cell wall biogenesis; peptidoglycan biosynthesis. In terms of biological role, catalyzes the initial step of the lipid cycle reactions in the biosynthesis of the cell wall peptidoglycan: transfers peptidoglycan precursor phospho-MurNAc-pentapeptide from UDP-MurNAc-pentapeptide onto the lipid carrier undecaprenyl phosphate, yielding undecaprenyl-pyrophosphoryl-MurNAc-pentapeptide, known as lipid I. The sequence is that of Phospho-N-acetylmuramoyl-pentapeptide-transferase from Shewanella oneidensis (strain ATCC 700550 / JCM 31522 / CIP 106686 / LMG 19005 / NCIMB 14063 / MR-1).